Consider the following 842-residue polypeptide: Gamma-aminobutyric acid type B receptor subunit 2 (842 aa).

The first 17 residues, M1 to G17, serve as a signal peptide directing secretion. Topologically, residues Y18 to S438 are extracellular. 4 N-linked (GlcNAc...) asparagine glycosylation sites follow: N274, N279, N327, and N366. The helical transmembrane segment at I439–L459 threads the bilayer. The Cytoplasmic segment spans residues L460–N477. Residues L478–L498 form a helical membrane-spanning segment. At D499 to D506 the chain is on the extracellular side. The chain crosses the membrane as a helical span at residues V507–F527. Over G528 to L556 the chain is Cytoplasmic. Residues F557–V577 form a helical membrane-spanning segment. At S578 to G610 the chain is on the extracellular side. N605 carries an N-linked (GlcNAc...) asparagine glycan. A helical transmembrane segment spans residues V611 to A631. Residues W632–Y647 lie on the Cytoplasmic side of the membrane. Residues I648 to I668 traverse the membrane as a helical segment. Topologically, residues L669–M676 are extracellular. Residues F677–V697 form a helical membrane-spanning segment. Residues P698–L842 lie on the Cytoplasmic side of the membrane. The span at A725 to S740 shows a compositional bias: polar residues. Disordered regions lie at residues A725–I744 and S791–L842.

Belongs to the G-protein coupled receptor 3 family. As to quaternary structure, may form a heterodimer with gbb-1. Expressed in cholinergic motor neurons.

It localises to the cell membrane. Its function is as follows. Component of a heterodimeric G-protein coupled receptor for GABA, formed by gbb-1 and gbb-2. Within the heterodimeric GABA receptor, only gbb-1 seems to bind agonists, while gbb-2 mediates coupling to G proteins. Ligand binding causes a conformation change that triggers signaling via guanine nucleotide-binding proteins (G proteins) and modulates the activity of down-stream effectors, such as adenylate cyclase. Signaling inhibits adenylate cyclase, stimulates phospholipase A2, activates potassium channels, inactivates voltage-dependent calcium-channels and modulates inositol phospholipid hydrolysis. Plays a critical role in the fine-tuning of inhibitory synaptic transmission. Pre-synaptic GABA receptor inhibits neurotransmitter release by down-regulating high-voltage activated calcium channels, whereas postsynaptic GABA receptor decreases neuronal excitability by activating a prominent inwardly rectifying potassium (Kir) conductance that underlies the late inhibitory postsynaptic potentials. Along with gbb-1, may couple to the G(o)-alpha G-protein goa-1 to negatively regulate cholinergic receptor activity in the presence of high levels of acetylcholine in ventral cord motor neurons. As acetylcholine depolarizes body wall muscles, modulation of acetylcholine levels most likely results in the control of locomotory behavior. Regulates locomotory behavior in response to GABA release by GABAergic motor neurons. This is Gamma-aminobutyric acid type B receptor subunit 2 from Caenorhabditis elegans.